Consider the following 441-residue polypeptide: Ubiquitin carboxyl-terminal hydrolase MINDY-3 (441 aa).

The Nucleophile role is filled by C51. The active-site Proton acceptor is H284.

The protein belongs to the MINDY deubiquitinase family. FAM188 subfamily.

Its subcellular location is the nucleus. It carries out the reaction Thiol-dependent hydrolysis of ester, thioester, amide, peptide and isopeptide bonds formed by the C-terminal Gly of ubiquitin (a 76-residue protein attached to proteins as an intracellular targeting signal).. Hydrolase that can remove 'Lys-48'-linked conjugated ubiquitin from proteins. The polypeptide is Ubiquitin carboxyl-terminal hydrolase MINDY-3 (mindy3) (Xenopus tropicalis (Western clawed frog)).